A 154-amino-acid polypeptide reads, in one-letter code: SsrA-binding protein (154 aa).

Over residues 123–142 the composition is skewed to basic and acidic residues; sequence AEHDKRHTIKDRDWQREQGR. The segment at 123 to 154 is disordered; sequence AEHDKRHTIKDRDWQREQGRLMRHKVSAPHKD. Positions 143 to 154 are enriched in basic residues; that stretch reads LMRHKVSAPHKD.

The protein belongs to the SmpB family.

The protein localises to the cytoplasm. Required for rescue of stalled ribosomes mediated by trans-translation. Binds to transfer-messenger RNA (tmRNA), required for stable association of tmRNA with ribosomes. tmRNA and SmpB together mimic tRNA shape, replacing the anticodon stem-loop with SmpB. tmRNA is encoded by the ssrA gene; the 2 termini fold to resemble tRNA(Ala) and it encodes a 'tag peptide', a short internal open reading frame. During trans-translation Ala-aminoacylated tmRNA acts like a tRNA, entering the A-site of stalled ribosomes, displacing the stalled mRNA. The ribosome then switches to translate the ORF on the tmRNA; the nascent peptide is terminated with the 'tag peptide' encoded by the tmRNA and targeted for degradation. The ribosome is freed to recommence translation, which seems to be the essential function of trans-translation. The chain is SsrA-binding protein from Leptothrix cholodnii (strain ATCC 51168 / LMG 8142 / SP-6) (Leptothrix discophora (strain SP-6)).